The sequence spans 94 residues: Small ribosomal subunit protein uS19 (94 aa).

Belongs to the universal ribosomal protein uS19 family.

Functionally, protein S19 forms a complex with S13 that binds strongly to the 16S ribosomal RNA. The chain is Small ribosomal subunit protein uS19 from Acidobacterium capsulatum (strain ATCC 51196 / DSM 11244 / BCRC 80197 / JCM 7670 / NBRC 15755 / NCIMB 13165 / 161).